A 393-amino-acid polypeptide reads, in one-letter code: S-adenosylmethionine synthase (393 aa).

His-16 serves as a coordination point for ATP. Mg(2+) is bound at residue Asp-18. Position 44 (Glu-44) interacts with K(+). The L-methionine site is built by Glu-57 and Gln-100. Residues 100–110 are flexible loop; the sequence is QSNDIAQGVDH. ATP-binding positions include 167 to 169, 238 to 239, Asp-247, 253 to 254, Ala-270, and Lys-274; these read DAK, RF, and RK. Asp-247 serves as a coordination point for L-methionine. Lys-278 is an L-methionine binding site.

The protein belongs to the AdoMet synthase family. In terms of assembly, homotetramer; dimer of dimers. The cofactor is Mg(2+). K(+) is required as a cofactor.

It localises to the cytoplasm. It catalyses the reaction L-methionine + ATP + H2O = S-adenosyl-L-methionine + phosphate + diphosphate. Its pathway is amino-acid biosynthesis; S-adenosyl-L-methionine biosynthesis; S-adenosyl-L-methionine from L-methionine: step 1/1. Functionally, catalyzes the formation of S-adenosylmethionine (AdoMet) from methionine and ATP. The overall synthetic reaction is composed of two sequential steps, AdoMet formation and the subsequent tripolyphosphate hydrolysis which occurs prior to release of AdoMet from the enzyme. This is S-adenosylmethionine synthase from Acidovorax sp. (strain JS42).